The chain runs to 389 residues: Formate-dependent phosphoribosylglycinamide formyltransferase (389 aa).

Residues 15 to 16 (EL) and glutamate 75 contribute to the N(1)-(5-phospho-beta-D-ribosyl)glycinamide site. ATP contacts are provided by residues arginine 107, lysine 148, 153 to 158 (SSGKGQ), 188 to 191 (EEFL), and glutamate 196. The region spanning 112-302 (DLAAGELALR…EFELHLRAVL (191 aa)) is the ATP-grasp domain. Residues glutamate 261 and glutamate 273 each coordinate Mg(2+). N(1)-(5-phospho-beta-D-ribosyl)glycinamide contacts are provided by residues aspartate 280, lysine 350, and 357 to 358 (RR).

The protein belongs to the PurK/PurT family. Homodimer.

It carries out the reaction N(1)-(5-phospho-beta-D-ribosyl)glycinamide + formate + ATP = N(2)-formyl-N(1)-(5-phospho-beta-D-ribosyl)glycinamide + ADP + phosphate + H(+). Its pathway is purine metabolism; IMP biosynthesis via de novo pathway; N(2)-formyl-N(1)-(5-phospho-D-ribosyl)glycinamide from N(1)-(5-phospho-D-ribosyl)glycinamide (formate route): step 1/1. In terms of biological role, involved in the de novo purine biosynthesis. Catalyzes the transfer of formate to 5-phospho-ribosyl-glycinamide (GAR), producing 5-phospho-ribosyl-N-formylglycinamide (FGAR). Formate is provided by PurU via hydrolysis of 10-formyl-tetrahydrofolate. The sequence is that of Formate-dependent phosphoribosylglycinamide formyltransferase from Synechococcus sp. (strain WH7803).